The sequence spans 438 residues: Xylose isomerase (438 aa).

Catalysis depends on residues H100 and D103. Mg(2+) is bound by residues E231, E267, H270, D295, D306, D308, and D338.

The protein belongs to the xylose isomerase family. In terms of assembly, homotetramer. The cofactor is Mg(2+).

The protein localises to the cytoplasm. It carries out the reaction alpha-D-xylose = alpha-D-xylulofuranose. The sequence is that of Xylose isomerase from Pseudomonas fluorescens (strain Pf0-1).